A 328-amino-acid polypeptide reads, in one-letter code: Biotin synthase (328 aa).

One can recognise a Radical SAM core domain in the interval 43 to 272 (NVVQKASLLS…KSTVRLSAGR (230 aa)). [4Fe-4S] cluster-binding residues include Cys58, Cys62, and Cys65. Positions 103, 135, 195, and 267 each coordinate [2Fe-2S] cluster.

It belongs to the radical SAM superfamily. Biotin synthase family. As to quaternary structure, homodimer. Requires [4Fe-4S] cluster as cofactor. It depends on [2Fe-2S] cluster as a cofactor.

It carries out the reaction (4R,5S)-dethiobiotin + (sulfur carrier)-SH + 2 reduced [2Fe-2S]-[ferredoxin] + 2 S-adenosyl-L-methionine = (sulfur carrier)-H + biotin + 2 5'-deoxyadenosine + 2 L-methionine + 2 oxidized [2Fe-2S]-[ferredoxin]. It functions in the pathway cofactor biosynthesis; biotin biosynthesis; biotin from 7,8-diaminononanoate: step 2/2. Functionally, catalyzes the conversion of dethiobiotin (DTB) to biotin by the insertion of a sulfur atom into dethiobiotin via a radical-based mechanism. The polypeptide is Biotin synthase (Allorhizobium ampelinum (strain ATCC BAA-846 / DSM 112012 / S4) (Agrobacterium vitis (strain S4))).